Here is a 585-residue protein sequence, read N- to C-terminus: Pyruvate kinase (585 aa).

Arginine 32 provides a ligand contact to substrate. K(+) contacts are provided by asparagine 34, serine 36, aspartate 66, and threonine 67. Position 34–37 (34–37) interacts with ATP; the sequence is NFSH. ATP-binding residues include arginine 73 and lysine 156. Glutamate 221 lines the Mg(2+) pocket. 3 residues coordinate substrate: glycine 244, aspartate 245, and threonine 277. Aspartate 245 is a Mg(2+) binding site.

It belongs to the pyruvate kinase family. The protein in the C-terminal section; belongs to the PEP-utilizing enzyme family. Requires Mg(2+) as cofactor. K(+) is required as a cofactor.

It carries out the reaction pyruvate + ATP = phosphoenolpyruvate + ADP + H(+). The protein operates within carbohydrate degradation; glycolysis; pyruvate from D-glyceraldehyde 3-phosphate: step 5/5. This is Pyruvate kinase (pyk) from Staphylococcus epidermidis (strain ATCC 35984 / DSM 28319 / BCRC 17069 / CCUG 31568 / BM 3577 / RP62A).